Here is a 202-residue protein sequence, read N- to C-terminus: Ras-related protein Rab-18 (202 aa).

GTP contacts are provided by Ser-20, Gly-23, Lys-24, Ser-25, Ser-26, Asp-37, Pro-38, Thr-43, Gly-69, Lys-126, Asp-128, and Ala-155. An Effector region motif is present at residues 40–48; sequence QAATIGVDF. The interval 183-202 is disordered; that stretch reads RPTFRLGQPTDTSSGNLCGC. Polar residues predominate over residues 191–202; sequence PTDTSSGNLCGC. 2 S-geranylgeranyl cysteine lipidation sites follow: Cys-200 and Cys-202. Position 202 is a cysteine methyl ester (Cys-202).

It belongs to the small GTPase superfamily. Rab family.

It catalyses the reaction GTP + H2O = GDP + phosphate + H(+). Functionally, the small GTPases Rab are key regulators of intracellular membrane trafficking, from the formation of transport vesicles to their fusion with membranes. Rabs cycle between an inactive GDP-bound form and an active GTP-bound form that is able to recruit to membranes different sets of downstream effectors directly responsible for vesicle formation, movement, tethering and fusion. Plays a role in apical endocytosis/recycling. May be implicated in transport between the plasma membrane and early endosomes. The chain is Ras-related protein Rab-18 (rab-18) from Caenorhabditis briggsae.